The primary structure comprises 1008 residues: Translation initiation factor IF-2 (1008 aa).

Disordered stretches follow at residues 113-136 (AVTAQEAPKTAPTAESPEDVKGNV), 153-235 (DKDS…PAAP), and 253-405 (GLTV…YRKD). Basic and acidic residues-rich tracts occupy residues 153-180 (DKDSKKSAKNTKPVEKVAAEKPIEKAKP) and 189-213 (PKPEPKQETPKTEQPVKKETPKAET). Composition is skewed to low complexity over residues 294 to 329 (GPNKPAGANPNGPRPAGSNPNGPRPQGTNPNGPRPQ) and 342 to 358 (GGPNRPGVPNRPNSNGP). Basic and acidic residues predominate over residues 365–381 (ASEKGEVTGKQIQDKIK). In terms of domain architecture, tr-type G spans 507–677 (DRAPIVTIMG…LLEAEMLELK (171 aa)). Residues 516–523 (GHVDHGKT) form a G1 region. 516–523 (GHVDHGKT) provides a ligand contact to GTP. Positions 541 to 545 (GITQH) are G2. Positions 563-566 (DTPG) are G3. GTP contacts are provided by residues 563-567 (DTPGH) and 617-620 (NKID). Residues 617 to 620 (NKID) are G4. Residues 653 to 655 (SAK) form a G5 region.

The protein belongs to the TRAFAC class translation factor GTPase superfamily. Classic translation factor GTPase family. IF-2 subfamily.

It localises to the cytoplasm. In terms of biological role, one of the essential components for the initiation of protein synthesis. Protects formylmethionyl-tRNA from spontaneous hydrolysis and promotes its binding to the 30S ribosomal subunits. Also involved in the hydrolysis of GTP during the formation of the 70S ribosomal complex. The sequence is that of Translation initiation factor IF-2 from Cytophaga hutchinsonii (strain ATCC 33406 / DSM 1761 / CIP 103989 / NBRC 15051 / NCIMB 9469 / D465).